Reading from the N-terminus, the 115-residue chain is Non-specific lipid-transfer protein 4.3 (115 aa).

The signal sequence occupies residues 1–25 (MARAAATQLVLVAMVAAMLLVATDA). 4 disulfides stabilise this stretch: Cys29–Cys77, Cys39–Cys54, Cys55–Cys97, and Cys75–Cys111.

This sequence belongs to the plant LTP family.

Its function is as follows. Plant non-specific lipid-transfer proteins transfer phospholipids as well as galactolipids across membranes. May play a role in wax or cutin deposition in the cell walls of expanding epidermal cells and certain secretory tissues. This Hordeum vulgare (Barley) protein is Non-specific lipid-transfer protein 4.3 (LTP4.3).